The chain runs to 1530 residues: Neurexin-1 (1530 aa).

An N-terminal signal peptide occupies residues 1–30 (MGTALLQRGGCFLLCLSLLLLGCWAELGSG). The 182-residue stretch at 31–212 (LEFPGAEGQW…KLDDEPPNSG (182 aa)) folds into the Laminin G-like 1 domain. Topologically, residues 31-1454 (LEFPGAEGQW…EVIRESSSTT (1424 aa)) are extracellular. N-linked (GlcNAc...) asparagine glycosylation is found at asparagine 125 and asparagine 190. The interval 199–221 (SGEVKLDDEPPNSGGGSPCEAGE) is disordered. The EGF-like 1 domain occupies 213–256 (GGSPCEAGEEGEGGVCLNGGVCSVVDDQAVCDCSRTGFRGKDCS). 2 disulfides stabilise this stretch: cysteine 228–cysteine 243 and cysteine 245–cysteine 255. Laminin G-like domains are found at residues 299 to 496 (IATF…AFKC) and 503 to 695 (DPIT…KPSC). Positions 345, 362, and 430 each coordinate Ca(2+). Disulfide bonds link cysteine 460–cysteine 496, cysteine 666–cysteine 695, cysteine 703–cysteine 714, cysteine 708–cysteine 723, and cysteine 725–cysteine 735. One can recognise an EGF-like 2 domain in the interval 699–736 (TAKPCLSNPCKNNGMCRDGWNRYVCDCSGTGYLGRSCE). A glycan (O-linked (Glc...) serine) is linked at serine 705. Laminin G-like domains are found at residues 741-914 (VLSY…IDYC) and 928-1103 (DPVT…ERGC). Ca(2+) is bound by residues aspartate 788 and leucine 805. Asparagine 813 carries N-linked (GlcNAc...) asparagine glycosylation. Arginine 864 contributes to the Ca(2+) binding site. Cystine bridges form between cysteine 906-cysteine 914, cysteine 1075-cysteine 1103, cysteine 1110-cysteine 1121, cysteine 1115-cysteine 1130, and cysteine 1132-cysteine 1142. One can recognise an EGF-like 3 domain in the interval 1106–1143 (PSTTCQEDSCSNQGVCLQQWDGISCDCSMTSFSGPLCN). A Laminin G-like 6 domain is found at 1149 to 1347 (YIFSKGGGQI…DANIAIVGNV (199 aa)). Residues aspartate 1199 and valine 1216 each coordinate Ca(2+). Asparagine 1246 carries N-linked (GlcNAc...) asparagine glycosylation. Ca(2+) contacts are provided by isoleucine 1298 and asparagine 1300. Residue serine 1408 is glycosylated (O-linked (Xyl...) (heparan sulfate) serine). The disordered stretch occupies residues 1411 to 1443 (CPSDDEDIDPCEPSSGGLANPTRAGGREPYPGS). The chain crosses the membrane as a helical span at residues 1455 to 1475 (GMVVGIVAAAALCILILLYAM). Over 1476-1530 (YKYRNRDEGSYHVDESRNYISNSAQSNGAVVKEKQPSSAKSANKNKKNKDKEYYV) the chain is Cytoplasmic. Residues 1497 to 1523 (NSAQSNGAVVKEKQPSSAKSANKNKKN) are interaction with CASK. The interval 1497–1530 (NSAQSNGAVVKEKQPSSAKSANKNKKNKDKEYYV) is disordered.

Belongs to the neurexin family. As to quaternary structure, interacts (via laminin G-like domain 2 and/or laminin G-like domain 6) with NLGN1 forming a heterotetramer, where one NLGN1 dimer interacts with one NRXN1 dimer. Also interacts (via laminin G-like domain 2 and/or laminin G-like domain 6) with NLGN2, NLGN3 and NLGN4L; interactions with NLGN1, NLGN2, NLGN3 and NLGN4L are calcium-dependent. Interacts (via cytoplasmic C-terminal region) with CASK (via the PDZ, SH3 and guanylate kinase-like domains). Interacts (via cytoplasmic C-terminus) with CASKIN1 and APBA1. Interacts (via laminin G-like domain 2) with NXPH1 and NXPH3. Alpha-type isoforms (neurexin-1-alpha) interact (via laminin G-like domain 2 and/or laminin G-like domain 6) with DAG1 (via alpha-dystroglycan chain). Interacts with LRRTM1, LRRTM2, LRRTM3 and LRRTM4. Interacts with SYT13 and SYTL1. Interacts with CBLN1, CBLN2 and, less avidly, with CBLN4. Interacts with CLSTN3. Alpha-type isoforms interact with alpha-latrotoxin from spider venom. In terms of processing, O-glycosylated; contains heparan sulfate. Heparan sulfate attachment is required for synapse development by mediating interactions with neuroligins and LRRTM2.

Its subcellular location is the presynaptic cell membrane. Cell surface protein involved in cell-cell-interactions, exocytosis of secretory granules and regulation of signal transmission. Function is isoform-specific. Alpha-type isoforms have a long N-terminus with six laminin G-like domains and play an important role in synaptic signal transmission. Alpha-type isoforms play a role in the regulation of calcium channel activity and Ca(2+)-triggered neurotransmitter release at synapses and at neuromuscular junctions. They play an important role in Ca(2+)-triggered exocytosis of secretory granules in pituitary gland. They may affect their functions at synapses and in endocrine cells via their interactions with proteins from the exocytotic machinery. Likewise, alpha-type isoforms play a role in regulating the activity of postsynaptic NMDA receptors, a subtype of glutamate-gated ion channels. Both alpha-type and beta-type isoforms may play a role in the formation or maintenance of synaptic junctions via their interactions (via the extracellular domains) with neuroligin family members, CBLN1 or CBLN2. In vitro, triggers the de novo formation of presynaptic structures. May be involved in specification of excitatory synapses. Alpha-type isoforms were first identified as receptors for alpha-latrotoxin from spider venom. This is Neurexin-1 (NRXN1) from Bos taurus (Bovine).